The primary structure comprises 350 residues: Meiotic driver wtf30 (350 aa).

Residues 1-92 form a disordered region; it reads MKNKYYPLRS…RENHSSGTTD (92 aa). Residues 11 to 29 show a composition bias toward basic and acidic residues; that stretch reads SIDELSTKNDNEIDLEKGP. The segment covering 57–72 has biased composition (polar residues); the sequence is GANNPNLFNTDESTTP. Transmembrane regions (helical) follow at residues 97–117, 134–154, 165–185, 190–210, 226–246, 253–273, and 280–300; these read FLIKLLISFIPIFVLNVPAVC, WVYFGMWCASCLMIFISLWCF, CVKVTAISLAKCVKVISIGLF, EMMIIIWILWLIICCILFVYI, CTISAVLLLIVSSVCIPFWTF, LAKVFLLQSGIVLVLNGTMFL, and WTGCEIEASVLFIMGNVLFLC.

It belongs to the WTF family. As to quaternary structure, homomer. Forms protein aggregates. The two isoforms can interact with each other and with themselves. High sequence similarity is required for their interaction.

The protein resides in the spore membrane. The protein localises to the vacuole membrane. Its subcellular location is the ascus epiplasm. It localises to the cytoplasm. It is found in the endoplasmic reticulum membrane. Promotes unequal transmission of alleles from the parental zygote to progeny spores by acting as poison/antidote system where the poison and antidote proteins are produced from the same locus; the poison component is trans-acting and targets all spores within an ascus whereas the antidote component is spore-specific, leading to poisoning of all progeny that do not inherit the allele. In terms of biological role, localizes isoform 2 to the vacuole thereby facilitating its degradation. Functionally, forms toxic aggregates that disrupt spore maturation. The polypeptide is Meiotic driver wtf30 (Schizosaccharomyces kambucha (Fission yeast)).